Reading from the N-terminus, the 237-residue chain is Uridylate kinase (237 aa).

10-13 (KLSG) provides a ligand contact to ATP. G51 contributes to the UMP binding site. The ATP site is built by G52 and R56. Residues D71 and 133-140 (TGNPCFTT) each bind UMP. ATP is bound by residues T160, Y166, and D169.

It belongs to the UMP kinase family. As to quaternary structure, homohexamer.

Its subcellular location is the cytoplasm. The enzyme catalyses UMP + ATP = UDP + ADP. It functions in the pathway pyrimidine metabolism; CTP biosynthesis via de novo pathway; UDP from UMP (UMPK route): step 1/1. Inhibited by UTP. Catalyzes the reversible phosphorylation of UMP to UDP. This Vesicomyosocius okutanii subsp. Calyptogena okutanii (strain HA) protein is Uridylate kinase.